Here is a 202-residue protein sequence, read N- to C-terminus: Holliday junction branch migration complex subunit RuvA (202 aa).

Residues 1 to 64 are domain I; it reads MIGRLSGTLL…EDAHLLFGFA (64 aa). A domain II region spans residues 65–143; the sequence is GRAERELFRQ…SLPSADLLSP (79 aa). The flexible linker stretch occupies residues 144–152; the sequence is APAAGAALL. Residues 153 to 202 are domain III; the sequence is VENDERADISQALQALGYSAREAEAALKSVPDGTDVATGIRLALKALARP.

Belongs to the RuvA family. In terms of assembly, homotetramer. Forms an RuvA(8)-RuvB(12)-Holliday junction (HJ) complex. HJ DNA is sandwiched between 2 RuvA tetramers; dsDNA enters through RuvA and exits via RuvB. An RuvB hexamer assembles on each DNA strand where it exits the tetramer. Each RuvB hexamer is contacted by two RuvA subunits (via domain III) on 2 adjacent RuvB subunits; this complex drives branch migration. In the full resolvosome a probable DNA-RuvA(4)-RuvB(12)-RuvC(2) complex forms which resolves the HJ.

It localises to the cytoplasm. In terms of biological role, the RuvA-RuvB-RuvC complex processes Holliday junction (HJ) DNA during genetic recombination and DNA repair, while the RuvA-RuvB complex plays an important role in the rescue of blocked DNA replication forks via replication fork reversal (RFR). RuvA specifically binds to HJ cruciform DNA, conferring on it an open structure. The RuvB hexamer acts as an ATP-dependent pump, pulling dsDNA into and through the RuvAB complex. HJ branch migration allows RuvC to scan DNA until it finds its consensus sequence, where it cleaves and resolves the cruciform DNA. This is Holliday junction branch migration complex subunit RuvA from Laribacter hongkongensis (strain HLHK9).